A 305-amino-acid chain; its full sequence is Aquaporin NIP6-1 (305 aa).

The interval 1-30 (MDHEEIPSTPSTPATTPGTPGAPLFGGFEG) is disordered. The segment covering 7–23 (PSTPSTPATTPGTPGAP) has biased composition (low complexity). 2 helical membrane passes run 82-102 (LGAEFVGTLILIFAGTATAIV) and 111-131 (TLIGCAASAGLAVMIVILSTG). The NPA 1 signature appears at 139–141 (NPA). The next 3 helical transmembrane spans lie at 159-179 (VYIGAQVMASVSAAFALKAVF), 194-214 (LSQAFALEFIISFNLMFVVTA), and 221-241 (AVGELAGIAVGATVMLNILIA). Residues 250–252 (NPV) carry the NPA 2 motif. The helical transmembrane segment at 267–287 (IWVYLTAPILGALIGAGTYTI) threads the bilayer. Serine 302 is subject to Phosphoserine.

It belongs to the MIP/aquaporin (TC 1.A.8) family. NIP (TC 1.A.8.12) subfamily. Expressed in roots.

The protein localises to the membrane. Its function is as follows. Transports glycerol, urea and formamide, in Xenopus laevis oocytes. Very low water transport activity. The sequence is that of Aquaporin NIP6-1 (NIP6-1) from Arabidopsis thaliana (Mouse-ear cress).